Reading from the N-terminus, the 152-residue chain is Leptin (152 aa).

The signal sequence occupies residues M1 to A26. A disulfide bridge connects residues C109 and C152.

Belongs to the leptin family. Expressed mostly in the liver.

It localises to the secreted. Functionally, may function as part of a signaling pathway that acts to regulate the size of the body fat depot. This Takifugu rubripes (Japanese pufferfish) protein is Leptin (lep).